The chain runs to 309 residues: MILTVTMNPSIDISYPLDELKIDTVNRVVDVTKTAGGKGLNVTRVLSEFGDSVLATGLVGGKLGEFLVEHIDNQVKKDFFSIKGETRNCIAILHGDNQTEVLEKGPEVLEQEGQEFLEHFKKLLESVEVVAISGSLPAGLPVDYYASLVELANQAGKPVVLDCSGAALQAVLESPHKPTVIKPNNEELSQLLGREVSEDLDELKEVLQEPLFAGIEWIIVSLGANGTFAKHGDTFYKVDIPRIQVVNPVGSGDXTVAGISSGLLHKESDAELLIKANVLGMLNAQEKMTGHVNMANYQALYDQLIVKEV.

Belongs to the carbohydrate kinase PfkB family. LacC subfamily.

The enzyme catalyses D-tagatofuranose 6-phosphate + ATP = D-tagatofuranose 1,6-bisphosphate + ADP + H(+). It participates in carbohydrate metabolism; D-tagatose 6-phosphate degradation; D-glyceraldehyde 3-phosphate and glycerone phosphate from D-tagatose 6-phosphate: step 1/2. In Streptococcus pneumoniae serotype 19F (strain G54), this protein is Tagatose-6-phosphate kinase.